A 117-amino-acid polypeptide reads, in one-letter code: Non-specific lipid-transfer protein 1 (117 aa).

The N-terminal stretch at M1–A26 is a signal peptide. 4 disulfide bridges follow: C29/C76, C39/C53, C54/C99, and C74/C113.

It belongs to the plant LTP family.

In terms of biological role, plant non-specific lipid-transfer proteins transfer phospholipids as well as galactolipids across membranes. May play a role in wax or cutin deposition in the cell walls of expanding epidermal cells and certain secretory tissues. The chain is Non-specific lipid-transfer protein 1 from Prunus dulcis (Almond).